We begin with the raw amino-acid sequence, 248 residues long: Tryptophan synthase alpha chain (248 aa).

Active-site proton acceptor residues include Glu36 and Asp47.

The protein belongs to the TrpA family. Tetramer of two alpha and two beta chains.

The catalysed reaction is (1S,2R)-1-C-(indol-3-yl)glycerol 3-phosphate + L-serine = D-glyceraldehyde 3-phosphate + L-tryptophan + H2O. It functions in the pathway amino-acid biosynthesis; L-tryptophan biosynthesis; L-tryptophan from chorismate: step 5/5. In terms of biological role, the alpha subunit is responsible for the aldol cleavage of indoleglycerol phosphate to indole and glyceraldehyde 3-phosphate. The sequence is that of Tryptophan synthase alpha chain from Pyrococcus furiosus (strain ATCC 43587 / DSM 3638 / JCM 8422 / Vc1).